The primary structure comprises 119 residues: Large ribosomal subunit protein uL22 (119 aa).

It belongs to the universal ribosomal protein uL22 family. In terms of assembly, part of the 50S ribosomal subunit.

Functionally, this protein binds specifically to 23S rRNA; its binding is stimulated by other ribosomal proteins, e.g. L4, L17, and L20. It is important during the early stages of 50S assembly. It makes multiple contacts with different domains of the 23S rRNA in the assembled 50S subunit and ribosome. The globular domain of the protein is located near the polypeptide exit tunnel on the outside of the subunit, while an extended beta-hairpin is found that lines the wall of the exit tunnel in the center of the 70S ribosome. The protein is Large ribosomal subunit protein uL22 of Rickettsia akari (strain Hartford).